The chain runs to 239 residues: uncharacterized protein (239 aa).

Residues 13–66 (IEYLVDKLNGPSEFARKTGVTLSTITRWRKGEADPSRSNLVKIAEVTGVSIEWL) form the HTH cro/C1-type domain. The segment at residues 24–43 (SEFARKTGVTLSTITRWRKG) is a DNA-binding region (H-T-H motif).

This is an uncharacterized protein from Haemophilus influenzae (strain ATCC 51907 / DSM 11121 / KW20 / Rd).